The following is a 132-amino-acid chain: Myelin P2 protein (132 aa).

Serine 2 is modified (N-acetylserine). Position 107 (arginine 107) interacts with (9Z)-octadecenoate. Residue arginine 107 participates in hexadecanoate binding. Cysteine 118 and cysteine 125 form a disulfide bridge. Residue 127 to 129 (RIY) coordinates (9Z)-octadecenoate. 127–129 (RIY) contributes to the hexadecanoate binding site.

This sequence belongs to the calycin superfamily. Fatty-acid binding protein (FABP) family. As to quaternary structure, monomer.

Its subcellular location is the cytoplasm. Its function is as follows. May play a role in lipid transport protein in Schwann cells. May bind cholesterol. This chain is Myelin P2 protein, found in Sus scrofa (Pig).